We begin with the raw amino-acid sequence, 486 residues long: Zinc finger CCCH domain-containing protein 49 (486 aa).

Residues 157-184 (RNRAHVCSFYVRGECTRGAECPYRHEMP) form a C3H1-type zinc finger. The RRM domain occupies 228–301 (RTLYIGGLDS…VRLKLMWGKP (74 aa)). 2 disordered regions span residues 329–348 (SQQQ…QQQP) and 379–486 (LVES…NGMT). 2 stretches are compositionally biased toward low complexity: residues 389–407 (PGPQ…GQSY) and 415–430 (YHGG…YGGY). A compositionally biased stretch (pro residues) spans 431–444 (MPPPRMPYQQPPQY). Low complexity predominate over residues 445-486 (PAYQPMLAPPAQSQASSLQQPAPATQQLGQGPQQQTTQNGMT).

The protein is Zinc finger CCCH domain-containing protein 49 of Oryza sativa subsp. japonica (Rice).